We begin with the raw amino-acid sequence, 347 residues long: NADH-ubiquinone oxidoreductase chain 2 (347 aa).

The next 9 helical transmembrane spans lie at Pro3–Ser23, Tyr59–Met79, Val93–Val115, Asn150–Leu170, Ile178–Pro198, Leu200–Ala220, Met240–Phe260, Asn274–Thr294, and Leu326–Leu346.

It belongs to the complex I subunit 2 family. Core subunit of respiratory chain NADH dehydrogenase (Complex I) which is composed of 45 different subunits. Interacts with TMEM242.

The protein localises to the mitochondrion inner membrane. The enzyme catalyses a ubiquinone + NADH + 5 H(+)(in) = a ubiquinol + NAD(+) + 4 H(+)(out). In terms of biological role, core subunit of the mitochondrial membrane respiratory chain NADH dehydrogenase (Complex I) which catalyzes electron transfer from NADH through the respiratory chain, using ubiquinone as an electron acceptor. Essential for the catalytic activity and assembly of complex I. The polypeptide is NADH-ubiquinone oxidoreductase chain 2 (Elephas maximus (Indian elephant)).